The chain runs to 698 residues: Glycine--tRNA ligase beta subunit (698 aa).

The protein belongs to the class-II aminoacyl-tRNA synthetase family. Tetramer of two alpha and two beta subunits.

Its subcellular location is the cytoplasm. It carries out the reaction tRNA(Gly) + glycine + ATP = glycyl-tRNA(Gly) + AMP + diphosphate. This Xanthomonas campestris pv. campestris (strain B100) protein is Glycine--tRNA ligase beta subunit.